Reading from the N-terminus, the 159-residue chain is ATP synthase subunit b 2 (159 aa).

A helical transmembrane segment spans residues 1 to 21; sequence MDATFWAFIALVIFVAIVVYM.

This sequence belongs to the ATPase B chain family. As to quaternary structure, F-type ATPases have 2 components, F(1) - the catalytic core - and F(0) - the membrane proton channel. F(1) has five subunits: alpha(3), beta(3), gamma(1), delta(1), epsilon(1). F(0) has three main subunits: a(1), b(2) and c(10-14). The alpha and beta chains form an alternating ring which encloses part of the gamma chain. F(1) is attached to F(0) by a central stalk formed by the gamma and epsilon chains, while a peripheral stalk is formed by the delta and b chains.

The protein localises to the cell inner membrane. Functionally, f(1)F(0) ATP synthase produces ATP from ADP in the presence of a proton or sodium gradient. F-type ATPases consist of two structural domains, F(1) containing the extramembraneous catalytic core and F(0) containing the membrane proton channel, linked together by a central stalk and a peripheral stalk. During catalysis, ATP synthesis in the catalytic domain of F(1) is coupled via a rotary mechanism of the central stalk subunits to proton translocation. In terms of biological role, component of the F(0) channel, it forms part of the peripheral stalk, linking F(1) to F(0). In Brucella abortus (strain S19), this protein is ATP synthase subunit b 2.